Here is a 75-residue protein sequence, read N- to C-terminus: uncharacterized protein (75 aa).

This is an uncharacterized protein from Equus caballus (Horse).